The sequence spans 166 residues: Putative signal peptidase complex catalytic subunit SEC11B (166 aa).

The Cytoplasmic portion of the chain corresponds to 1 to 6 (MNKWRL). Residues 7 to 24 (YYQVLNFGMIVSSALMIW) form a helical; Signal-anchor for type II membrane protein membrane-spanning segment. The Extracellular portion of the chain corresponds to 25 to 166 (KGLMVITGSE…LGLFVLVHRE (142 aa)). Ser-43 is a catalytic residue.

Belongs to the peptidase S26B family.

It is found in the membrane. The catalysed reaction is Cleavage of hydrophobic, N-terminal signal or leader sequences from secreted and periplasmic proteins.. In terms of biological role, putative component of some signal peptidase complex which removes signal peptides from nascent proteins as they are translocated into the lumen of the endoplasmic reticulum. The sequence is that of Putative signal peptidase complex catalytic subunit SEC11B (SEC11B) from Homo sapiens (Human).